The following is a 96-amino-acid chain: Protein Vpr (96 aa).

The interval 1 to 42 is homooligomerization; sequence MEQAPGDQGPQREPYNEWALEILEELKNEAVRHFPRPWLHGL. Residues S79, S94, and S96 each carry the phosphoserine; by host modification.

Belongs to the HIV-1 VPR protein family. In terms of assembly, homooligomer, may form homodimer. Interacts with p6-gag region of the Pr55 Gag precursor protein through a (Leu-X-X)4 motif near the C-terminus of the P6gag protein. Interacts with host UNG. May interact with host RAD23A/HHR23A. Interacts with host VPRBP/DCAF1, leading to hijack the CUL4A-RBX1-DDB1-DCAF1/VPRBP complex, mediating ubiquitination of host proteins such as TERT and ZGPAT and arrest of the cell cycle in G2 phase. Phosphorylated on several residues by host. These phosphorylations regulate VPR activity for the nuclear import of the HIV-1 pre-integration complex.

It localises to the virion. It is found in the host nucleus. Its subcellular location is the host extracellular space. During virus replication, may deplete host UNG protein, and incude G2-M cell cycle arrest. Acts by targeting specific host proteins for degradation by the 26S proteasome, through association with the cellular CUL4A-DDB1 E3 ligase complex by direct interaction with host VPRPB/DCAF-1. Cell cycle arrest reportedly occurs within hours of infection and is not blocked by antiviral agents, suggesting that it is initiated by the VPR carried into the virion. Additionally, VPR induces apoptosis in a cell cycle dependent manner suggesting that these two effects are mechanistically linked. Detected in the serum and cerebrospinal fluid of AIDS patient, VPR may also induce cell death to bystander cells. In terms of biological role, during virus entry, plays a role in the transport of the viral pre-integration (PIC) complex to the host nucleus. This function is crucial for viral infection of non-dividing macrophages. May act directly at the nuclear pore complex, by binding nucleoporins phenylalanine-glycine (FG)-repeat regions. The sequence is that of Protein Vpr from Human immunodeficiency virus type 1 group M subtype F1 (isolate VI850) (HIV-1).